A 242-amino-acid chain; its full sequence is Large ribosomal subunit protein uL1 (242 aa).

The protein belongs to the universal ribosomal protein uL1 family. In terms of assembly, part of the 50S ribosomal subunit.

In terms of biological role, binds directly to 23S rRNA. The L1 stalk is quite mobile in the ribosome, and is involved in E site tRNA release. Functionally, protein L1 is also a translational repressor protein, it controls the translation of the L11 operon by binding to its mRNA. This chain is Large ribosomal subunit protein uL1, found in Sulfurihydrogenibium sp. (strain YO3AOP1).